The sequence spans 3582 residues: Ubiquitin carboxyl-terminal hydrolase 34 (3582 aa).

Phosphoserine is present on residues serine 352, serine 486, serine 487, and serine 490. Disordered regions lie at residues glutamate 503–glycine 533, glutamine 551–asparagine 670, glycine 682–threonine 705, histidine 775–methionine 801, and threonine 1496–glutamate 1515. Low complexity predominate over residues alanine 510–serine 524. Positions serine 560–asparagine 570 are enriched in polar residues. Positions serine 571 to serine 590 are enriched in low complexity. Polar residues predominate over residues asparagine 591 to valine 609. Residues glutamine 610–aspartate 653 show a composition bias toward acidic residues. Over residues serine 684–threonine 697 the composition is skewed to polar residues. Positions histidine 775 to aspartate 798 are enriched in basic residues. The span at proline 1504–valine 1514 shows a compositional bias: acidic residues. Serine 1506 carries the phosphoserine modification. One can recognise a USP domain in the interval valine 1931 to methionine 2276. Cysteine 1940 (nucleophile) is an active-site residue. The active-site Proton acceptor is histidine 2201. Serine 2525 is subject to Phosphoserine. Residues serine 3369 to cysteine 3484 are disordered. The segment covering glutamine 3373 to glutamate 3384 has biased composition (basic and acidic residues). 2 positions are modified to phosphoserine: serine 3395 and serine 3396. Residue threonine 3418 is modified to Phosphothreonine. 2 positions are modified to phosphoserine: serine 3423 and serine 3443. Basic and acidic residues predominate over residues aspartate 3463–cysteine 3484. Serine 3539 carries the post-translational modification Phosphoserine.

It belongs to the peptidase C19 family. In terms of assembly, interacts with AXIN1 and AXIN2.

The enzyme catalyses Thiol-dependent hydrolysis of ester, thioester, amide, peptide and isopeptide bonds formed by the C-terminal Gly of ubiquitin (a 76-residue protein attached to proteins as an intracellular targeting signal).. In terms of biological role, ubiquitin hydrolase that can remove conjugated ubiquitin from AXIN1 and AXIN2, thereby acting as a regulator of Wnt signaling pathway. Acts as an activator of the Wnt signaling pathway downstream of the beta-catenin destruction complex by deubiquitinating and stabilizing AXIN1 and AXIN2, leading to promote nuclear accumulation of AXIN1 and AXIN2 and positively regulate beta-catenin (CTNBB1)-mediated transcription. Recognizes and hydrolyzes the peptide bond at the C-terminal Gly of ubiquitin. Involved in the processing of poly-ubiquitin precursors as well as that of ubiquitinated proteins. This is Ubiquitin carboxyl-terminal hydrolase 34 (Usp34) from Mus musculus (Mouse).